Consider the following 183-residue polypeptide: Protein SHI RELATED SEQUENCE 6 (183 aa).

Zn(2+) contacts are provided by Cys-41, Cys-44, Cys-52, Cys-57, Cys-61, and Cys-68. Residues 41–68 (CRDCGNRAKKECLFERCRTCCKSRGYNC) constitute a DNA-binding region (zn(2)-C6 fungal-type; degenerate). Over residues 79-88 (SSATRSSSSP) the composition is skewed to low complexity. Residues 79 to 121 (SSATRSSSSPSERKKKLKIDKQSSPNVSLLPTTTSRQERGFRE) are disordered. Positions 100 to 113 (QSSPNVSLLPTTTS) are enriched in polar residues. A Required for homo- and heterodimerization motif is present at residues 157–160 (ISGH).

It belongs to the SHI protein family.

Its subcellular location is the nucleus. Functionally, transcription activator that binds DNA on 5'-ACTCTAC-3' and promotes auxin homeostasis-regulating gene expression (e.g. YUC genes), as well as genes affecting stamen development, cell expansion and timing of flowering. Synergistically with other SHI-related proteins, regulates gynoecium, stamen and leaf development in a dose-dependent manner, controlling apical-basal patterning. Promotes style and stigma formation, and influences vascular development during gynoecium development. May also have a role in the formation and/or maintenance of the shoot apical meristem (SAM). The protein is Protein SHI RELATED SEQUENCE 6 (SRS6) of Arabidopsis thaliana (Mouse-ear cress).